The primary structure comprises 602 residues: MQSERQKYIRNFSIVAHIDHGKSTLADRLIEATGTLTEREMDTQVLDNMDLEKERGITIKSQAVRLIYKRNTGEEYTLNLIDTPGHVDFNYEVSRSLAACEGAILVVDATQGIQAQTLANCYLALDNDLEIVPVINKIDLPSARPEEVKQEIEDVIGIEAEDAPLVSAKTGLNIKDALEAIVNKVPAPEGDEKAPLKALIFDSYYDSYKGVVCHIRVKEGTIKEGTEIKLMNTGKVYEVVEVGVFVPNYMPVDELKAGDVGYVTASIKNVRDARVGDTITEAKRSANEALSGYRPAVPMVFSGIYPVDGAKYEELKEALEKLQVNDAALSFEPETSIALGFGFRCGFLGLLHMDIIQERLEREFNLDIITTAPSVIYKITKTDGTLIELTNPTNMPSPSEIKLMEEPIVKSSIITPSDYVGAVMDLAQNRRGIFKDMQYLDTTRVSLNYEIPLNEIIYDFFDALKSRTRGYASFDYELIGYKDADLVKLDILLNADVVDALSMIVPRERAYAKGRNMAQKLKEIIPRQMFEIPIQAAVGAKIIARETIKAMRKDVLAKCYGGDISRKRKLLEKQKEGKKRMRQVGSVEVPQEAFMAVLKTEE.

The tr-type G domain maps to 7–189; it reads KYIRNFSIVA…AIVNKVPAPE (183 aa). GTP is bound by residues 19 to 24 and 136 to 139; these read DHGKST and NKID.

This sequence belongs to the TRAFAC class translation factor GTPase superfamily. Classic translation factor GTPase family. LepA subfamily.

The protein localises to the cell membrane. It catalyses the reaction GTP + H2O = GDP + phosphate + H(+). In terms of biological role, required for accurate and efficient protein synthesis under certain stress conditions. May act as a fidelity factor of the translation reaction, by catalyzing a one-codon backward translocation of tRNAs on improperly translocated ribosomes. Back-translocation proceeds from a post-translocation (POST) complex to a pre-translocation (PRE) complex, thus giving elongation factor G a second chance to translocate the tRNAs correctly. Binds to ribosomes in a GTP-dependent manner. The chain is Elongation factor 4 from Clostridium botulinum (strain Okra / Type B1).